Here is a 565-residue protein sequence, read N- to C-terminus: Periplasmic trehalase (565 aa).

Positions Met-1–Ala-30 are cleaved as a signal peptide. Substrate is bound by residues Arg-152, Trp-159–Asp-160, Asn-196, Arg-205–Gln-207, Arg-277–Glu-279, and Gly-310. Active-site proton donor/acceptor residues include Asp-312 and Glu-496. Glu-511 serves as a coordination point for substrate. The interval Cys-539–Pro-565 is disordered.

It belongs to the glycosyl hydrolase 37 family. As to quaternary structure, monomer.

It localises to the periplasm. It catalyses the reaction alpha,alpha-trehalose + H2O = alpha-D-glucose + beta-D-glucose. Provides the cells with the ability to utilize trehalose at high osmolarity by splitting it into glucose molecules that can subsequently be taken up by the phosphotransferase-mediated uptake system. This is Periplasmic trehalase from Escherichia coli O1:K1 / APEC.